The chain runs to 65 residues: Large ribosomal subunit protein bL35 (65 aa).

This sequence belongs to the bacterial ribosomal protein bL35 family.

The protein is Large ribosomal subunit protein bL35 of Prochlorococcus marinus (strain MIT 9301).